Here is a 187-residue protein sequence, read N- to C-terminus: MDLKNHFLVAMPSMNDPVFTRSVIYICEHDSDGTMGLRINQPVQISLKGMLDQIKLDNPSPIIFPQTLSQPVLNGGPVSDDRGFVLHYPKDNYSSSIEVTEELSVTTSKDILATLGTEDQPYKYLVALGYSGWDAGQLEQELSENTWLILEADSSVIFDTPIPDRWRRAIEILGISPVNISSEVGHA.

This sequence belongs to the UPF0301 (AlgH) family.

The sequence is that of UPF0301 protein VSAL_I0547 from Aliivibrio salmonicida (strain LFI1238) (Vibrio salmonicida (strain LFI1238)).